A 503-amino-acid polypeptide reads, in one-letter code: Ell-associated factor Eaf (503 aa).

2 stretches are compositionally biased toward polar residues: residues Thr-119–Ala-145 and Glu-167–Asn-186. Disordered regions lie at residues Thr-119–Asp-220, Gly-250–Val-360, and Gly-372–Asp-503. Ser-196 is modified (phosphoserine). Positions Ser-202–Ser-215 are enriched in low complexity. Composition is skewed to polar residues over residues Gly-250–Ile-273 and Met-298–Ser-307. Low complexity predominate over residues Asn-308–Ser-337. Acidic residues predominate over residues Asp-385 to Glu-400. Low complexity-rich tracts occupy residues Gln-406–Gln-437, His-454–Gln-472, and Leu-487–Ser-497.

It belongs to the EAF family.

The protein localises to the nucleus. In terms of biological role, promotes transcriptional elongation by Su(Tpl)/ELL. Essential for development. The polypeptide is Ell-associated factor Eaf (Drosophila sechellia (Fruit fly)).